Reading from the N-terminus, the 525-residue chain is Ribosomal protein S6 kinase beta-1 (525 aa).

A disordered region spans residues 1 to 54 (MRRRRRRDGFYPAPDFRDREAEDMAGVFDIDLDQPEDAGSEDELEEGGQLNESM). The TOS motif motif lies at 28–32 (FDIDL). Residues 30-46 (IDLDQPEDAGSEDELEE) show a composition bias toward acidic residues. The 262-residue stretch at 91–352 (FELLRVLGKG…AGEVQAHPFF (262 aa)) folds into the Protein kinase domain. Residues 97-105 (LGKGGYGKV) and lysine 123 each bind ATP. Aspartate 218 acts as the Proton acceptor in catalysis. Position 252 is a phosphothreonine; by PDPK1 (threonine 252). Positions 353–423 (RHINWEELLA…VAPSVLESVK (71 aa)) constitute an AGC-kinase C-terminal domain. Residues 380 to 399 (SQFDSKFTRQTPVDSPDDST) are disordered. The span at 381–399 (QFDSKFTRQTPVDSPDDST) shows a compositional bias: polar residues. Serine 394 carries the phosphoserine modification. A Phosphothreonine; by MTOR, NEK6 and NEK7 modification is found at threonine 412. The segment at 424 to 525 (EKFSFEPKIR…KRPEHLRMNL (102 aa)) is autoinhibitory domain. Serine 434 and serine 441 each carry phosphoserine. At threonine 444 the chain carries Phosphothreonine. A phosphoserine mark is found at serine 447 and serine 452. Lysine 516 is subject to N6-acetyllysine.

Belongs to the protein kinase superfamily. AGC Ser/Thr protein kinase family. S6 kinase subfamily. As to quaternary structure, interacts with PPP1R9A/neurabin-1. Interacts with RPTOR. Interacts with IRS1. Interacts with EIF3B and EIF3C. Interacts with TRAF4. Interacts with POLDIP3. Interacts (via N-terminus) with IER5. In terms of assembly, (Microbial infection) Interacts with Mumps virus phosphoprotein; this interaction may play a role in the viral replication and transcription. Phosphorylation at Thr-412 is regulated by mTORC1. The phosphorylation at this site is maintained by an agonist-dependent autophosphorylation mechanism. Activated by phosphorylation at Thr-252 by PDPK1. Dephosphorylation by PPP1CC at Thr-412 in mitochondrion. As to expression, widely expressed.

It is found in the synapse. It localises to the synaptosome. The protein localises to the mitochondrion outer membrane. Its subcellular location is the mitochondrion. The protein resides in the nucleus. It is found in the cytoplasm. The enzyme catalyses L-seryl-[protein] + ATP = O-phospho-L-seryl-[protein] + ADP + H(+). It catalyses the reaction L-threonyl-[protein] + ATP = O-phospho-L-threonyl-[protein] + ADP + H(+). With respect to regulation, activation requires multiple phosphorylation events on serine/threonine residues. Activation appears to be first mediated by phosphorylation of multiple sites in the autoinhibitory domain, which facilitates phosphorylation at Thr-412, disrupting the autoinhibitory mechanism and allowing phosphorylation of Thr-252 by PDPK1. The active conformation of the kinase is believed to be stabilized by a mechanism involving three conserved phosphorylation sites located in the kinase domain activation loop (Thr-252) and in the AGC-kinase C-terminal domain (Ser-394 in the middle of the tail/linker region and Thr-412 within a hydrophobic motif at its end). Activated by mTORC1; isoform Alpha I and isoform Alpha II are sensitive to rapamycin, which inhibits activating phosphorylation at Thr-412. Activated by PDPK1. In terms of biological role, serine/threonine-protein kinase that acts downstream of mTOR signaling in response to growth factors and nutrients to promote cell proliferation, cell growth and cell cycle progression. Regulates protein synthesis through phosphorylation of EIF4B, RPS6 and EEF2K, and contributes to cell survival by repressing the pro-apoptotic function of BAD. Under conditions of nutrient depletion, the inactive form associates with the EIF3 translation initiation complex. Upon mitogenic stimulation, phosphorylation by the mechanistic target of rapamycin complex 1 (mTORC1) leads to dissociation from the EIF3 complex and activation. The active form then phosphorylates and activates several substrates in the pre-initiation complex, including the EIF2B complex and the cap-binding complex component EIF4B. Also controls translation initiation by phosphorylating a negative regulator of EIF4A, PDCD4, targeting it for ubiquitination and subsequent proteolysis. Promotes initiation of the pioneer round of protein synthesis by phosphorylating POLDIP3/SKAR. In response to IGF1, activates translation elongation by phosphorylating EEF2 kinase (EEF2K), which leads to its inhibition and thus activation of EEF2. Also plays a role in feedback regulation of mTORC2 by mTORC1 by phosphorylating MAPKAP1/SIN1, MTOR and RICTOR, resulting in the inhibition of mTORC2 and AKT1 signaling. Also involved in feedback regulation of mTORC1 and mTORC2 by phosphorylating DEPTOR. Mediates cell survival by phosphorylating the pro-apoptotic protein BAD and suppressing its pro-apoptotic function. Phosphorylates mitochondrial URI1 leading to dissociation of a URI1-PPP1CC complex. The free mitochondrial PPP1CC can then dephosphorylate RPS6KB1 at Thr-412, which is proposed to be a negative feedback mechanism for the RPS6KB1 anti-apoptotic function. Mediates TNF-alpha-induced insulin resistance by phosphorylating IRS1 at multiple serine residues, resulting in accelerated degradation of IRS1. In cells lacking functional TSC1-2 complex, constitutively phosphorylates and inhibits GSK3B. May be involved in cytoskeletal rearrangement through binding to neurabin. Phosphorylates and activates the pyrimidine biosynthesis enzyme CAD, downstream of MTOR. Following activation by mTORC1, phosphorylates EPRS and thereby plays a key role in fatty acid uptake by adipocytes and also most probably in interferon-gamma-induced translation inhibition. The polypeptide is Ribosomal protein S6 kinase beta-1 (RPS6KB1) (Homo sapiens (Human)).